A 475-amino-acid polypeptide reads, in one-letter code: uncharacterized protein (475 aa).

2 consecutive 4Fe-4S ferredoxin-type domains span residues 303 to 333 (ASEFRDVLRCIRCGACMNTCPAYRHIGGHGY) and 352 to 381 (YKDFKDLPYACSLCTACDNVCPVRIPLSKL). Residues cysteine 312, cysteine 315, cysteine 318, cysteine 322, cysteine 362, cysteine 365, cysteine 368, and cysteine 372 each coordinate [4Fe-4S] cluster.

This sequence belongs to the LutB/YkgF family.

This is an uncharacterized protein from Escherichia coli (strain K12).